The sequence spans 466 residues: Histidine--tRNA ligase (466 aa).

This sequence belongs to the class-II aminoacyl-tRNA synthetase family. Homodimer.

It is found in the cytoplasm. It carries out the reaction tRNA(His) + L-histidine + ATP = L-histidyl-tRNA(His) + AMP + diphosphate + H(+). The chain is Histidine--tRNA ligase (hisS) from Xylella fastidiosa (strain 9a5c).